A 227-amino-acid polypeptide reads, in one-letter code: Ribose-5-phosphate isomerase A (227 aa).

Residues 26–29 (TGST), 82–85 (DGAD), and 95–98 (KGGG) contribute to the substrate site. Glu104 acts as the Proton acceptor in catalysis. Lys122 is a binding site for substrate.

This sequence belongs to the ribose 5-phosphate isomerase family. Homodimer.

It catalyses the reaction aldehydo-D-ribose 5-phosphate = D-ribulose 5-phosphate. The protein operates within carbohydrate degradation; pentose phosphate pathway; D-ribose 5-phosphate from D-ribulose 5-phosphate (non-oxidative stage): step 1/1. Functionally, catalyzes the reversible conversion of ribose-5-phosphate to ribulose 5-phosphate. This is Ribose-5-phosphate isomerase A from Streptococcus equi subsp. equi (strain 4047).